The chain runs to 142 residues: 3-hydroxyacyl-[acyl-carrier-protein] dehydratase FabZ (142 aa).

His-41 is a catalytic residue.

Belongs to the thioester dehydratase family. FabZ subfamily.

The protein resides in the cytoplasm. The catalysed reaction is a (3R)-hydroxyacyl-[ACP] = a (2E)-enoyl-[ACP] + H2O. Its function is as follows. Involved in unsaturated fatty acids biosynthesis. Catalyzes the dehydration of short chain beta-hydroxyacyl-ACPs and long chain saturated and unsaturated beta-hydroxyacyl-ACPs. The protein is 3-hydroxyacyl-[acyl-carrier-protein] dehydratase FabZ of Symbiobacterium thermophilum (strain DSM 24528 / JCM 14929 / IAM 14863 / T).